Reading from the N-terminus, the 463-residue chain is Phosphoglucosamine mutase (463 aa).

The Phosphoserine intermediate role is filled by S110. The Mg(2+) site is built by S110, D255, D257, and D259. S110 is modified (phosphoserine).

The protein belongs to the phosphohexose mutase family. Requires Mg(2+) as cofactor. Post-translationally, activated by phosphorylation.

It catalyses the reaction alpha-D-glucosamine 1-phosphate = D-glucosamine 6-phosphate. Its function is as follows. Catalyzes the conversion of glucosamine-6-phosphate to glucosamine-1-phosphate. The polypeptide is Phosphoglucosamine mutase (Koribacter versatilis (strain Ellin345)).